The primary structure comprises 484 residues: uncharacterized protein (484 aa).

To M.thermoautotrophicum MTH1153.

This is an uncharacterized protein from Methanocaldococcus jannaschii (strain ATCC 43067 / DSM 2661 / JAL-1 / JCM 10045 / NBRC 100440) (Methanococcus jannaschii).